The chain runs to 131 residues: RutC family protein YjgH (131 aa).

Belongs to the RutC family.

The protein is RutC family protein YjgH (yjgH) of Escherichia coli (strain K12).